The following is a 341-amino-acid chain: Casein kinase I isoform alpha (341 aa).

Residues 16-284 (YKLIRKIGSG…YLRQLFRILF (269 aa)) form the Protein kinase domain. ATP-binding positions include 22-30 (IGSGSFGDI) and Lys-45. The active-site Proton acceptor is the Asp-135. The span at 306-320 (QSQSSGVPGTNTTTQ) shows a compositional bias: polar residues. The segment at 306-341 (QSQSSGVPGTNTTTQGATVPSAGVPAGVAPGGTTPQ) is disordered. The segment covering 321–341 (GATVPSAGVPAGVAPGGTTPQ) has biased composition (low complexity).

The protein belongs to the protein kinase superfamily. CK1 Ser/Thr protein kinase family. Casein kinase I subfamily.

The catalysed reaction is L-seryl-[protein] + ATP = O-phospho-L-seryl-[protein] + ADP + H(+). The enzyme catalyses L-threonyl-[protein] + ATP = O-phospho-L-threonyl-[protein] + ADP + H(+). In Caenorhabditis elegans, this protein is Casein kinase I isoform alpha (kin-19).